An 847-amino-acid polypeptide reads, in one-letter code: Follistatin-related protein 5 (847 aa).

Residues 1-20 (MFRCWSAILILGFIFLASEG) form the signal peptide. A Kazal-like domain is found at 81 to 135 (ETRHAECACMDLCKQHYKPVCGSDGEFYENHCEVHRAACLKKQKITIVHNEDCFF). 3 disulfides stabilise this stretch: cysteine 87–cysteine 119, cysteine 93–cysteine 112, and cysteine 101–cysteine 133. 2 consecutive EF-hand domains span residues 175-210 (RKKP…EELN) and 211-246 (KDLS…QVIQ). Aspartate 188, aspartate 190, asparagine 192, glutamate 199, aspartate 226, asparagine 228, aspartate 230, histidine 232, and glutamate 237 together coordinate Ca(2+). Ig-like domains are found at residues 250 to 338 (PEDQ…FQVN) and 341 to 426 (PVIR…EDIS). Intrachain disulfides connect cysteine 270/cysteine 321 and cysteine 362/cysteine 413. Residues asparagine 318 and asparagine 394 are each glycosylated (N-linked (GlcNAc...) asparagine).

It localises to the secreted. The chain is Follistatin-related protein 5 (Fstl5) from Mus musculus (Mouse).